The chain runs to 150 residues: Endoribonuclease YbeY (150 aa).

Positions 102, 106, and 112 each coordinate Zn(2+).

Belongs to the endoribonuclease YbeY family. Requires Zn(2+) as cofactor.

It is found in the cytoplasm. In terms of biological role, single strand-specific metallo-endoribonuclease involved in late-stage 70S ribosome quality control and in maturation of the 3' terminus of the 16S rRNA. The polypeptide is Endoribonuclease YbeY (Thermotoga maritima (strain ATCC 43589 / DSM 3109 / JCM 10099 / NBRC 100826 / MSB8)).